Reading from the N-terminus, the 262-residue chain is Cutinase 1 (262 aa).

Tyr-61 is a poly(ethylene terephthalate) binding site. The Nucleophile role is filled by Ser-131. Residues Met-132 and Trp-156 each coordinate poly(ethylene terephthalate). Residues Asp-177 and His-209 each act as charge relay system in the active site. Cys-242 and Cys-260 are disulfide-bonded.

It belongs to the AB hydrolase superfamily.

It localises to the secreted. It is found in the periplasm. It catalyses the reaction (ethylene terephthalate)(n) + H2O = (ethylene terephthalate)(n-1) + 4-[(2-hydroxyethoxy)carbonyl]benzoate + H(+). The enzyme catalyses a butanoate ester + H2O = an aliphatic alcohol + butanoate + H(+). It carries out the reaction an acetyl ester + H2O = an aliphatic alcohol + acetate + H(+). The catalysed reaction is cutin + H2O = cutin monomers.. Functionally, catalyzes the hydrolysis of cutin, a polyester that forms the structure of plant cuticle. Shows esterase activity towards p-nitrophenol-linked aliphatic esters (pNP-aliphatic esters). Capable of degrading the plastic poly(ethylene terephthalate) (PET), the most abundant polyester plastic in the world. Capable of degrading the bioplastic poly(lactic acid) (PLLA). In Thermobifida cellulosilytica, this protein is Cutinase 1.